We begin with the raw amino-acid sequence, 841 residues long: Envelope glycoprotein H (841 aa).

The first 17 residues, 1–17 (MFALVLAVVILPLWTTA), serve as a signal peptide directing secretion. Residues Asn18, Asn45, and Asn217 are each glycosylated (N-linked (GlcNAc...) asparagine; by host). The Virion surface segment spans residues 18-802 (NKSYVTPTPA…ERRQAIRMSG (785 aa)). Positions 246 to 309 (DSGRVEVNIG…DPGPSYRVYL (64 aa)) are interaction with gL. N-linked (GlcNAc...) asparagine; by host glycans are attached at residues Asn317, Asn499, Asn522, Asn760, and Asn783. Residues 803-823 (QYLGASLGGAFLAVVGFGIIG) traverse the membrane as a helical segment. Topologically, residues 824–841 (WMLCGNSRLREYNKIPLT) are intravirion.

Belongs to the herpesviridae glycoprotein H family. As to quaternary structure, interacts with glycoprotein L (gL); this interaction is necessary for the correct processing and cell surface expression of gH. The heterodimer gH/gL seems to interact with gB trimers during fusion. In terms of processing, N-glycosylated, O-glycosylated, and sialylated.

The protein localises to the virion membrane. It is found in the host cell membrane. Its subcellular location is the host endosome membrane. Its function is as follows. The heterodimer glycoprotein H-glycoprotein L is required for the fusion of viral and plasma membranes leading to virus entry into the host cell. Following initial binding to host receptor, membrane fusion is mediated by the fusion machinery composed of gB and the heterodimer gH/gL. May also be involved in the fusion between the virion envelope and the outer nuclear membrane during virion morphogenesis. This is Envelope glycoprotein H from Varicella-zoster virus (strain Oka vaccine) (HHV-3).